The chain runs to 312 residues: Glyoxylate/hydroxypyruvate reductase A (312 aa).

Residue arginine 227 is part of the active site. Histidine 275 functions as the Proton donor in the catalytic mechanism.

This sequence belongs to the D-isomer specific 2-hydroxyacid dehydrogenase family. GhrA subfamily.

The protein resides in the cytoplasm. The enzyme catalyses glycolate + NADP(+) = glyoxylate + NADPH + H(+). The catalysed reaction is (R)-glycerate + NAD(+) = 3-hydroxypyruvate + NADH + H(+). It carries out the reaction (R)-glycerate + NADP(+) = 3-hydroxypyruvate + NADPH + H(+). Catalyzes the NADPH-dependent reduction of glyoxylate and hydroxypyruvate into glycolate and glycerate, respectively. The chain is Glyoxylate/hydroxypyruvate reductase A from Shigella dysenteriae serotype 1 (strain Sd197).